A 386-amino-acid chain; its full sequence is Tumor necrosis factor receptor superfamily member 10D (386 aa).

Disordered regions lie at residues 1-25 (MGLWGQSVPTASSARAGRYPGARTA) and 62-90 (DEVPQQTVAPQQQRRSLKEEECPAGSHRS). The N-terminal stretch at 1-55 (MGLWGQSVPTASSARAGRYPGARTASGTRPWLLDPKILKFVVFIVAVLLPVRVDS) is a signal peptide. The Extracellular segment spans residues 56-211 (ATIPRQDEVP…ILGMLASPYH (156 aa)). TNFR-Cys repeat units follow at residues 58–97 (IPRQDEVPQQTVAPQQQRRSLKEEECPAGSHRSEYTGACN), 98–139 (PCTE…DTVC), and 140–180 (QCEK…DIKC). Positions 64-75 (VPQQTVAPQQQR) are enriched in polar residues. 7 disulfide bridges follow: C83–C96, C99–C115, C118–C131, C121–C139, C141–C155, C158–C172, and C162–C180. N-linked (GlcNAc...) asparagine glycosylation occurs at N127. N182 carries N-linked (GlcNAc...) asparagine glycosylation. The helical transmembrane segment at 212 to 232 (YLIIIVVLVIILAVVVVGFSC) threads the bilayer. Residues 233 to 386 (RKKFISYLKG…DEAGSATSCL (154 aa)) are Cytoplasmic-facing. The 27-residue stretch at 340–366 (SADISTLLDASATLEEGHAKETIQDQL) folds into the Death; truncated domain.

In terms of tissue distribution, widely expressed, in particular in fetal kidney, lung and liver, and in adult testis and liver. Also expressed in peripheral blood leukocytes, colon and small intestine, ovary, prostate, thymus, spleen, pancreas, kidney, lung, placenta and heart.

The protein resides in the membrane. In terms of biological role, receptor for the cytotoxic ligand TRAIL. Contains a truncated death domain and hence is not capable of inducing apoptosis but protects against TRAIL-mediated apoptosis. Reports are contradictory with regards to its ability to induce the NF-kappa-B pathway. According to PubMed:9382840, it cannot but according to PubMed:9430226, it can induce the NF-kappa-B pathway. The polypeptide is Tumor necrosis factor receptor superfamily member 10D (Homo sapiens (Human)).